We begin with the raw amino-acid sequence, 93 residues long: Large ribosomal subunit protein bL36m (93 aa).

The transit peptide at methionine 1–serine 35 directs the protein to the mitochondrion.

It belongs to the bacterial ribosomal protein bL36 family. In terms of assembly, component of the mitochondrial large ribosomal subunit (mt-LSU). Mature yeast 74S mitochondrial ribosomes consist of a small (37S) and a large (54S) subunit. The 37S small subunit contains a 15S ribosomal RNA (15S mt-rRNA) and 34 different proteins. The 54S large subunit contains a 21S rRNA (21S mt-rRNA) and 46 different proteins. bL36m has a zinc binding site.

It is found in the mitochondrion. In terms of biological role, component of the mitochondrial ribosome (mitoribosome), a dedicated translation machinery responsible for the synthesis of mitochondrial genome-encoded proteins, including at least some of the essential transmembrane subunits of the mitochondrial respiratory chain. The mitoribosomes are attached to the mitochondrial inner membrane and translation products are cotranslationally integrated into the membrane. bL36m may be involved in a process influencing telomere capping. The polypeptide is Large ribosomal subunit protein bL36m (RTC6) (Saccharomyces cerevisiae (strain ATCC 204508 / S288c) (Baker's yeast)).